Consider the following 112-residue polypeptide: MISDKIKLTAKDILEKEFKTGMRGYQQEEVDKFLDMIIKDYEAFHKEFEQLKQQNARLKRELEEQKLAATQVPQQPVVQTPVAQPVYNNTNTDILKRLSNLEKAVFGSKLYE.

A coiled-coil region spans residues 38 to 72 (IKDYEAFHKEFEQLKQQNARLKRELEEQKLAATQV).

The protein belongs to the GpsB family. As to quaternary structure, forms polymers through the coiled coil domains. Interacts with PBP1, MreC and EzrA.

The protein localises to the cytoplasm. In terms of biological role, divisome component that associates with the complex late in its assembly, after the Z-ring is formed, and is dependent on DivIC and PBP2B for its recruitment to the divisome. Together with EzrA, is a key component of the system that regulates PBP1 localization during cell cycle progression. Its main role could be the removal of PBP1 from the cell pole after pole maturation is completed. Also contributes to the recruitment of PBP1 to the division complex. Not essential for septum formation. The polypeptide is Cell cycle protein GpsB (Bacillus anthracis (strain A0248)).